We begin with the raw amino-acid sequence, 340 residues long: MKLAVIGGDGIGPEVTAEALKVLNAVRDDIETTDYDLGARRYLKNGELLTDEDLASLREHDAILLGAIGAPGSVPPGILERGLLLKMRFALDHHVNLRPSKLYDGVESPLRNPGKIDFVVVREGTEGAYTGNGGAIRVGTPHEIANETSVNTRYGAERVIRYAFELAQSRRKKLTLVHKTNVLVHGGGLWQRTVDEVAKEYPEVAVDYNHIDAATIYLVTDPSRFDVIVTDNLFGDILTDEAGAVSGGIGLAASGNIDATGTNPSMFEPVHGSAPDIAGQGIADPTAAILSAAMLLRHLGDEDNAVRIETAIAADVAGRDNSQPISTTEVGDRIVKALQS.

Residues Arg-88, Arg-98, Arg-122, and Asp-212 each coordinate substrate. Mg(2+) contacts are provided by Asp-212, Asp-236, and Asp-240. 272 to 284 (GSAPDIAGQGIAD) is an NAD(+) binding site.

The protein belongs to the isocitrate and isopropylmalate dehydrogenases family. LeuB type 2 subfamily. In terms of assembly, homodimer. The cofactor is Mg(2+). It depends on Mn(2+) as a cofactor.

Its subcellular location is the cytoplasm. It carries out the reaction (2R,3S)-3-isopropylmalate + NAD(+) = 4-methyl-2-oxopentanoate + CO2 + NADH. It participates in amino-acid biosynthesis; L-leucine biosynthesis; L-leucine from 3-methyl-2-oxobutanoate: step 3/4. Catalyzes the oxidation of 3-carboxy-2-hydroxy-4-methylpentanoate (3-isopropylmalate) to 3-carboxy-4-methyl-2-oxopentanoate. The product decarboxylates to 4-methyl-2 oxopentanoate. In Corynebacterium glutamicum (strain ATCC 13032 / DSM 20300 / JCM 1318 / BCRC 11384 / CCUG 27702 / LMG 3730 / NBRC 12168 / NCIMB 10025 / NRRL B-2784 / 534), this protein is 3-isopropylmalate dehydrogenase (leuB).